The following is a 453-amino-acid chain: ATP-dependent protease ATPase subunit HslU (453 aa).

ATP-binding positions include Ile-18, 60–65, Asp-266, Glu-331, and Arg-403; that span reads GVGKTE.

The protein belongs to the ClpX chaperone family. HslU subfamily. As to quaternary structure, a double ring-shaped homohexamer of HslV is capped on each side by a ring-shaped HslU homohexamer. The assembly of the HslU/HslV complex is dependent on binding of ATP.

The protein resides in the cytoplasm. In terms of biological role, ATPase subunit of a proteasome-like degradation complex; this subunit has chaperone activity. The binding of ATP and its subsequent hydrolysis by HslU are essential for unfolding of protein substrates subsequently hydrolyzed by HslV. HslU recognizes the N-terminal part of its protein substrates and unfolds these before they are guided to HslV for hydrolysis. The polypeptide is ATP-dependent protease ATPase subunit HslU (Desulforapulum autotrophicum (strain ATCC 43914 / DSM 3382 / VKM B-1955 / HRM2) (Desulfobacterium autotrophicum)).